A 23-amino-acid chain; its full sequence is Cytochrome c3-1 (23 aa).

Positions 1 to 23 are disordered; that stretch reads AAPKAPADGLKMDKTKQXVVFNH. A heme-binding site is contributed by His-23.

Post-translationally, binds 4 heme groups per subunit.

The protein resides in the periplasm. Its function is as follows. Participates in sulfate respiration coupled with phosphorylation by transferring electrons from the enzyme dehydrogenase to ferredoxin. The sequence is that of Cytochrome c3-1 from Nitratidesulfovibrio vulgaris (Desulfovibrio vulgaris).